The chain runs to 387 residues: Phosphoglycerate kinase (387 aa).

Substrate is bound by residues 21–23, Arg-36, 59–62, Arg-113, and Arg-146; these read DLN and HLGR. ATP is bound by residues Lys-197, Glu-314, and 340 to 343; that span reads GGDT.

This sequence belongs to the phosphoglycerate kinase family. In terms of assembly, monomer.

The protein localises to the cytoplasm. The catalysed reaction is (2R)-3-phosphoglycerate + ATP = (2R)-3-phospho-glyceroyl phosphate + ADP. It participates in carbohydrate degradation; glycolysis; pyruvate from D-glyceraldehyde 3-phosphate: step 2/5. The protein is Phosphoglycerate kinase (pgk) of Vibrio cholerae serotype O1 (strain ATCC 39541 / Classical Ogawa 395 / O395).